The primary structure comprises 511 residues: GMP synthase [glutamine-hydrolyzing] (511 aa).

Residues 5 to 195 enclose the Glutamine amidotransferase type-1 domain; that stretch reads MILVLDFGGQ…LYNICGCKGD (191 aa). Cysteine 82 acts as the Nucleophile in catalysis. Catalysis depends on residues histidine 169 and glutamate 171. One can recognise a GMPS ATP-PPase domain in the interval 196–386; it reads WKMSSFVENS…LGIPEDLVWR (191 aa). Position 223-229 (223-229) interacts with ATP; it reads SGGVDSS.

As to quaternary structure, homodimer.

The catalysed reaction is XMP + L-glutamine + ATP + H2O = GMP + L-glutamate + AMP + diphosphate + 2 H(+). The protein operates within purine metabolism; GMP biosynthesis; GMP from XMP (L-Gln route): step 1/1. Functionally, catalyzes the synthesis of GMP from XMP. The polypeptide is GMP synthase [glutamine-hydrolyzing] (Ruminiclostridium cellulolyticum (strain ATCC 35319 / DSM 5812 / JCM 6584 / H10) (Clostridium cellulolyticum)).